The following is a 206-amino-acid chain: Triosephosphate isomerase (206 aa).

The Electrophile role is filled by H76. The active-site Proton acceptor is E146.

Belongs to the triosephosphate isomerase family. Homodimer.

It catalyses the reaction D-glyceraldehyde 3-phosphate = dihydroxyacetone phosphate. It functions in the pathway carbohydrate biosynthesis; gluconeogenesis. It participates in carbohydrate degradation; glycolysis; D-glyceraldehyde 3-phosphate from glycerone phosphate: step 1/1. The polypeptide is Triosephosphate isomerase (Tpi) (Anopheles merus (Mosquito)).